We begin with the raw amino-acid sequence, 292 residues long: MNKPFSCIGIVGHPRHPTALTTHEMLYRWLTAKGYQVIIEQQIARELKLEGVQTGTLAEIGRTADLAVVVGGDGNMLGAARVLARYDIKVIGINRGNLGFLTDLDPDNAQQQLADVLEGDYFVESRFLLEAQVCRQSGTPRIGTAINEVVLHPGKVAHMIEFEVYIDENFAFSQRSDGLIISTPTGSTAYSLSAGGPILTPSLDAIALVPMFPHTLSARPLVINSSSTIRLRFSHMRSDLEISCDSQIALPIQQSEDVLIRRSDYHLNLIHPKNYNYFNTLSSKLGWSKKLF.

Aspartate 73 serves as the catalytic Proton acceptor. NAD(+)-binding positions include 73–74 (DG), 147–148 (NE), histidine 158, arginine 175, aspartate 177, 188–193 (TAYSLS), and glutamine 247.

It belongs to the NAD kinase family. A divalent metal cation is required as a cofactor.

It is found in the cytoplasm. It carries out the reaction NAD(+) + ATP = ADP + NADP(+) + H(+). Functionally, involved in the regulation of the intracellular balance of NAD and NADP, and is a key enzyme in the biosynthesis of NADP. Catalyzes specifically the phosphorylation on 2'-hydroxyl of the adenosine moiety of NAD to yield NADP. The sequence is that of NAD kinase from Erwinia tasmaniensis (strain DSM 17950 / CFBP 7177 / CIP 109463 / NCPPB 4357 / Et1/99).